A 142-amino-acid polypeptide reads, in one-letter code: Type 3 secretion system pilotin (142 aa).

The signal sequence occupies residues 1–23; that stretch reads MIRHGSNKLKIFILSILLLTLSG. Cys-24 is lipidated: N-palmitoyl cysteine. Cys-24 carries the S-diacylglycerol cysteine lipid modification.

The protein belongs to the MxiM family. As to quaternary structure, monomer. Interacts with the secretin MxiD/SctC.

The protein localises to the cell outer membrane. Functionally, involved in the synthesis of the type III secretion system (T3SS), also called injectisome, which is used to inject bacterial effector proteins into eukaryotic host cells. Pilot protein that is required for the proper localization of the secretin MxiD/SctC in the outer membrane. Also influences both MxiD/SctC multimerization and stability. Required for both Ipa translocation and tissue culture cell invasion. Binds lipids. The chain is Type 3 secretion system pilotin from Shigella flexneri.